A 245-amino-acid polypeptide reads, in one-letter code: MRYKITVEYNGSSFSGWQKQQHSANSIQEKIENAIFNFSGEKIALYCGGRTDAGVHALGQVAHFDMEKECELYRIRNAINYHLKSIPIVVLNAEVVDDAFHARFSAKKRYYEYRIVNRYAPAALETGYVWQVFSPLDVNIMREAAKHLLGKHDLSSFRSKDCHAANPIRTIDDIDIVQNGNHIHIKISAISFLHNQVRIIAGTLVEFGKNRTNPQEMLHILSQCKRSAAGVTAPPFGLYLVKIDY.

Asp52 functions as the Nucleophile in the catalytic mechanism. Tyr111 is a binding site for substrate.

It belongs to the tRNA pseudouridine synthase TruA family. In terms of assembly, homodimer.

The enzyme catalyses uridine(38/39/40) in tRNA = pseudouridine(38/39/40) in tRNA. In terms of biological role, formation of pseudouridine at positions 38, 39 and 40 in the anticodon stem and loop of transfer RNAs. The polypeptide is tRNA pseudouridine synthase A (Wolbachia sp. subsp. Drosophila simulans (strain wRi)).